Here is a 188-residue protein sequence, read N- to C-terminus: Accessory gene regulator protein B (188 aa).

The next 4 helical transmembrane spans lie at 49 to 69 (VALL…YFFV), 82 to 102 (LLCH…IVHF), 104 to 124 (VSWT…ICYA), and 163 to 183 (YMQL…PIFF).

It belongs to the AgrB family.

It localises to the cell membrane. In terms of biological role, essential for the production of a quorum sensing system signal molecule, the autoinducing peptide (AIP). This quorum sensing system is responsible for the regulation of the expression of virulence factor genes. Involved in the proteolytic processing of AgrD, the precursor of AIP. The polypeptide is Accessory gene regulator protein B (Staphylococcus lugdunensis).